A 123-amino-acid chain; its full sequence is Large ribosomal subunit protein bL19 (123 aa).

This sequence belongs to the bacterial ribosomal protein bL19 family.

This protein is located at the 30S-50S ribosomal subunit interface and may play a role in the structure and function of the aminoacyl-tRNA binding site. The polypeptide is Large ribosomal subunit protein bL19 (rplS) (Treponema pallidum (strain Nichols)).